The following is a 187-amino-acid chain: Large ribosomal subunit protein uL5 (187 aa).

This sequence belongs to the universal ribosomal protein uL5 family. Part of the 50S ribosomal subunit; part of the 5S rRNA/L5/L18/L25 subcomplex. Contacts the 5S rRNA and the P site tRNA. Forms a bridge to the 30S subunit in the 70S ribosome.

In terms of biological role, this is one of the proteins that bind and probably mediate the attachment of the 5S RNA into the large ribosomal subunit, where it forms part of the central protuberance. In the 70S ribosome it contacts protein S13 of the 30S subunit (bridge B1b), connecting the 2 subunits; this bridge is implicated in subunit movement. Contacts the P site tRNA; the 5S rRNA and some of its associated proteins might help stabilize positioning of ribosome-bound tRNAs. This Mycobacterium sp. (strain JLS) protein is Large ribosomal subunit protein uL5.